Reading from the N-terminus, the 333-residue chain is Ribosomal RNA small subunit methyltransferase H (333 aa).

S-adenosyl-L-methionine-binding positions include 39–41 (GGY), aspartate 57, phenylalanine 84, aspartate 101, and glutamine 108.

The protein belongs to the methyltransferase superfamily. RsmH family.

It localises to the cytoplasm. It carries out the reaction cytidine(1402) in 16S rRNA + S-adenosyl-L-methionine = N(4)-methylcytidine(1402) in 16S rRNA + S-adenosyl-L-homocysteine + H(+). Its function is as follows. Specifically methylates the N4 position of cytidine in position 1402 (C1402) of 16S rRNA. This Dinoroseobacter shibae (strain DSM 16493 / NCIMB 14021 / DFL 12) protein is Ribosomal RNA small subunit methyltransferase H.